A 616-amino-acid chain; its full sequence is Centrosomal protein of 70 kDa (616 aa).

Coiled coils occupy residues E96 to R210 and N273 to L335. One copy of the TPR repeat lies at N502–S535.

Directly interacts with tubulin-gamma; this interaction determines centrosomal localization.

The protein resides in the cytoplasm. Its subcellular location is the cytoskeleton. It localises to the microtubule organizing center. It is found in the centrosome. Functionally, plays a role in the organization of both preexisting and nascent microtubules in interphase cells. During mitosis, required for the organization and orientation of the mitotic spindle. In Mus musculus (Mouse), this protein is Centrosomal protein of 70 kDa (Cep70).